Here is an 87-residue protein sequence, read N- to C-terminus: Large ribosomal subunit protein bL27 (87 aa).

Residues 1 to 23 (MAHKKGTGSTRNGRDSNAQRLGV) form a disordered region. Residues 7 to 19 (TGSTRNGRDSNAQ) are compositionally biased toward polar residues.

It belongs to the bacterial ribosomal protein bL27 family.

The sequence is that of Large ribosomal subunit protein bL27 (rpmA) from Synechocystis sp. (strain ATCC 27184 / PCC 6803 / Kazusa).